Here is a 413-residue protein sequence, read N- to C-terminus: Tryptophan synthase beta chain (413 aa).

Position 106 is an N6-(pyridoxal phosphate)lysine (K106).

Belongs to the TrpB family. Tetramer of two alpha and two beta chains. The cofactor is pyridoxal 5'-phosphate.

It catalyses the reaction (1S,2R)-1-C-(indol-3-yl)glycerol 3-phosphate + L-serine = D-glyceraldehyde 3-phosphate + L-tryptophan + H2O. It participates in amino-acid biosynthesis; L-tryptophan biosynthesis; L-tryptophan from chorismate: step 5/5. The beta subunit is responsible for the synthesis of L-tryptophan from indole and L-serine. This chain is Tryptophan synthase beta chain, found in Methylobacterium radiotolerans (strain ATCC 27329 / DSM 1819 / JCM 2831 / NBRC 15690 / NCIMB 10815 / 0-1).